Reading from the N-terminus, the 771-residue chain is ATP-dependent RNA helicase dbp7 (771 aa).

Positions 23 to 35 are enriched in basic and acidic residues; the sequence is TKVKGGTWRDRLS. The tract at residues 23–139 is disordered; it reads TKVKGGTWRD…EVEDAKPTNA (117 aa). Residues 53–69 are compositionally biased toward polar residues; it reads ASNGEQNSNPRNPNRIQ. Positions 90-105 are enriched in low complexity; the sequence is SQPRQQQQQHPGAPRQ. A compositionally biased stretch (basic and acidic residues) spans 119 to 135; it reads NAVEEKNEAGAEVEDAK. Residues 146 to 175 carry the Q motif motif; it reads DTFTNLGLSAPLAAHLLTKLEVKAPTAIQK. The Helicase ATP-binding domain maps to 179–378; sequence TQLLKEESDA…EISLKDAVHI (200 aa). Residue 192–199 participates in ATP binding; sequence AETGSGKT. Positions 314 to 317 match the DEAD box motif; the sequence is DEGD. Residues 403–615 enclose the Helicase C-terminal domain; the sequence is QLKQSYAIVA…ALTRNSADDI (213 aa). Disordered regions lie at residues 458–485 and 703–771; these read NGDE…KLGA and VPGL…FNLA. A compositionally biased stretch (acidic residues) spans 460–476; it reads DEEEKKEESEDSDEEDA. Over residues 712 to 723 the composition is skewed to basic and acidic residues; it reads DTKKDFKADRKP.

The protein belongs to the DEAD box helicase family. DDX31/DBP7 subfamily.

The protein resides in the nucleus. Its subcellular location is the nucleolus. The catalysed reaction is ATP + H2O = ADP + phosphate + H(+). In terms of biological role, ATP-binding RNA helicase involved in the biogenesis of 60S ribosomal subunits and is required for the normal formation of 25S and 5.8S rRNAs. The chain is ATP-dependent RNA helicase dbp7 (dbp7) from Aspergillus niger (strain ATCC MYA-4892 / CBS 513.88 / FGSC A1513).